Consider the following 91-residue polypeptide: Large ribosomal subunit protein bL31B (91 aa).

This sequence belongs to the bacterial ribosomal protein bL31 family. Type B subfamily. As to quaternary structure, part of the 50S ribosomal subunit.

The sequence is that of Large ribosomal subunit protein bL31B from Neisseria gonorrhoeae (strain NCCP11945).